The primary structure comprises 52 residues: Large ribosomal subunit protein bL33 (52 aa).

Belongs to the bacterial ribosomal protein bL33 family.

The polypeptide is Large ribosomal subunit protein bL33 (Anaeromyxobacter dehalogenans (strain 2CP-C)).